We begin with the raw amino-acid sequence, 1456 residues long: ABC transporter G family member 44 (1456 aa).

The ABC transporter 1 domain maps to 169–442 (ANLLHVVPNK…FESMGFKCPD (274 aa)). 202-209 (GPPGSGKT) is an ATP binding site. The region spanning 520-733 (ELLRTCIARE…AMNAIAVNEF (214 aa)) is the ABC transmembrane type-2 1 domain. 6 helical membrane-spanning segments follow: residues 538-558 (FVYRFRAFQLLVITIIVMTLF), 571-591 (GIVYLGALFFAMVAHMFNGFS), 626-646 (IPISCFEVAITVFLSYYVIGF), 658-678 (LLLLLVNQMAAALFRFIAALG), 682-702 (VVANTLASFALLVLLVLSGFI), and 768-788 (IGVGALFGYVIVFNILFTIAL). The tract at residues 812 to 844 (NITGETINDPRNSASSGQTTNTRRNAAPGEASE) is disordered. The span at 814 to 835 (TGETINDPRNSASSGQTTNTRR) shows a compositional bias: polar residues. One can recognise an ABC transporter 2 domain in the interval 858-1110 (VAFNNIRYSV…DLIEYFEGVE (253 aa)). Residue 903–910 (GVSGAGKT) coordinates ATP. The ABC transmembrane type-2 2 domain maps to 1183–1397 (TQCMACLWKQ…TLYGLVASQF (215 aa)). The next 7 membrane-spanning stretches (helical) occupy residues 1202–1222 (YTVVRFFFSLIVALMFGTIFW), 1242–1262 (YAAVLFMGISYSSSVQPVVAV), 1290–1310 (LPYVLVQSAVYGVIVYAMIGF), 1317–1337 (FFWYLYFMYFTLLYFTFYGML), 1347–1367 (IASIVSSFFYGIWNLFSGFVI), 1378–1398 (WYSWACPVSWTLYGLVASQFG), and 1425–1445 (FLGVVAVAVAGFATLFAVSFS).

This sequence belongs to the ABC transporter superfamily. ABCG family. PDR (TC 3.A.1.205) subfamily.

It is found in the membrane. Functionally, may be a general defense protein. The chain is ABC transporter G family member 44 from Oryza sativa subsp. japonica (Rice).